Reading from the N-terminus, the 286-residue chain is Probable aquaporin PIP2-5 (286 aa).

N-acetylmethionine is present on M1. Basic and acidic residues predominate over residues 1–18 (MTKEVVGDKRSFSGKDYQ). The segment at 1–23 (MTKEVVGDKRSFSGKDYQDPPPE) is disordered. Residues 1–38 (MTKEVVGDKRSFSGKDYQDPPPEPLFDATELGKWSFYR) are Cytoplasmic-facing. K3 is subject to N6,N6-dimethyllysine. Residues 39–59 (ALIAEFIATLLFLYVTIMTVI) traverse the membrane as a helical segment. The Extracellular segment spans residues 60–75 (GYKSQTDPALNPDQCT). A helical transmembrane segment spans residues 76–96 (GVGVLGIAWAFGGMIFILVYC). Over 97-124 (TAGISGGHINPAVTFGLLLARKVTLVRA) the chain is Cytoplasmic. Positions 106–108 (NPA) match the NPA 1 motif. A helical transmembrane segment spans residues 125 to 145 (VMYMVAQCLGAICGVALVKAF). Over 146–165 (QSAYFTRYGGGANGLSDGYS) the chain is Extracellular. Residues 166–186 (IGTGVAAEIIGTFVLVYTVFS) form a helical membrane-spanning segment. Over 187–200 (ATDPKRSARDSHVP) the chain is Cytoplasmic. The chain crosses the membrane as a helical span at residues 201-221 (VLAPLPIGFAVFIVHLATIPI). The Extracellular segment spans residues 222–248 (TGTGINPARSLGAAIIYNKDKAWDHHW). The NPA 2 motif lies at 227–229 (NPA). A helical membrane pass occupies residues 249 to 269 (IFWVGPFAGAAIAAFYHQFVL). Over 270–286 (RAGAIKALGSFRSQPHV) the chain is Cytoplasmic. Phosphoserine occurs at positions 279 and 282.

This sequence belongs to the MIP/aquaporin (TC 1.A.8) family. PIP (TC 1.A.8.11) subfamily. In terms of tissue distribution, expressed in green siliques.

It is found in the cell membrane. Its function is as follows. Aquaporins facilitate the transport of water and small neutral solutes across cell membranes. This Arabidopsis thaliana (Mouse-ear cress) protein is Probable aquaporin PIP2-5 (PIP2-5).